Reading from the N-terminus, the 202-residue chain is 3-isopropylmalate dehydratase small subunit 1 (202 aa).

Belongs to the LeuD family. LeuD type 1 subfamily. As to quaternary structure, heterodimer of LeuC and LeuD.

The catalysed reaction is (2R,3S)-3-isopropylmalate = (2S)-2-isopropylmalate. Its pathway is amino-acid biosynthesis; L-leucine biosynthesis; L-leucine from 3-methyl-2-oxobutanoate: step 2/4. In terms of biological role, catalyzes the isomerization between 2-isopropylmalate and 3-isopropylmalate, via the formation of 2-isopropylmaleate. The protein is 3-isopropylmalate dehydratase small subunit 1 of Bordetella pertussis (strain Tohama I / ATCC BAA-589 / NCTC 13251).